The chain runs to 474 residues: Semenogelin-2 (474 aa).

An N-terminal signal peptide occupies residues 1–23 (MKSIILFVLSLLLILEKQAAVMG). Disordered regions lie at residues 24 to 62 (QKGG…SKGS), 132 to 158 (GGQA…LSSQ), 173 to 194 (KEQA…QSSY), 226 to 247 (VREE…DRLQ), and 272 to 474 (NLNQ…SSTE). Polar residues-rich tracts occupy residues 31-40 (QLPSGSSQFP), 137-158 (RGTQ…LSSQ), and 174-194 (EQAS…QSSY). Positions 292–310 (RTEERQLNHGEKSVQKDVS) are enriched in basic and acidic residues. The segment covering 325-334 (KSQNQVTIHS) has biased composition (polar residues). The segment covering 335 to 346 (QDQEHGHKENKM) has biased composition (basic and acidic residues). The span at 372–397 (GSISIQTEEQIHGKSQNQVRIPSQAQ) shows a compositional bias: polar residues. Residues 399–426 (YGHKENKISYRSSSTEERRLNSGEKDVQ) show a composition bias toward basic and acidic residues. Residues 445 to 455 (KSQNQVTIPSQ) show a composition bias toward polar residues. Positions 456 to 465 (DQEHGHKENK) are enriched in basic and acidic residues.

The protein belongs to the semenogelin family. As to quaternary structure, interacts with SERPINA5.

The protein localises to the secreted. Participates in the formation of a gel matrix (sperm coagulum) entrapping the accessory gland secretions and ejaculated spermatozoa. This Gorilla gorilla gorilla (Western lowland gorilla) protein is Semenogelin-2 (SEMG2).